Consider the following 409-residue polypeptide: MKKELLASLVLCLSLSPLVSTNEVFAATTNKETKENVSITNEIGYEKVKDMLEQQKYDFEHNTPLAHPKESKLTDSDEGVLLYSALSKVDKQKFHEFTYDIDDVKTSEKNNKLIVEAYITRNFVFGVEKVTTSLGDNIKLEIPKTTSNKQSSQSTNTSNLSFSQVKNSSNQLNVIPLSNSSKQLNVTQLNNSSSTLQYENDEEYSSDVKLDEFLKKYKQEVKNDDKEEVKSEDKPVSMNFNAANSNQLTVTATSVKGYSGYAAMKYAEKYALKPNKNYKYYKDKDCTNFVSQALRAGRMPYFKEWKPYTDAWVNAGAFRSYILKAGGIKMKTVSDTYSNVKLGDVYHYDYHNKIGLRYADGWMDHTAIVTSRANMKLYVSYHSTNRLNVPREYVTSKEGGKRYVSSIRN.

The first 26 residues, 1-26 (MKKELLASLVLCLSLSPLVSTNEVFA), serve as a signal peptide directing secretion.

This is an uncharacterized protein from Bacillus subtilis (strain 168).